Here is a 244-residue protein sequence, read N- to C-terminus: 14-3-3 protein homolog 1 (244 aa).

It belongs to the 14-3-3 family.

This is 14-3-3 protein homolog 1 from Echinococcus multilocularis (Fox tapeworm).